The following is a 450-amino-acid chain: Glutathione reductase (450 aa).

Residues S14, G15, E34, T41, C42, and K50 each coordinate FAD. Glutathione is bound at residue S14. An intrachain disulfide couples C42 to C47. Y99 contributes to the glutathione binding site. A115 provides a ligand contact to FAD. Residues A175, I178, E181, R198, R204, and G262 each coordinate NADP(+). D303 is an FAD binding site. E309 lines the NADP(+) pocket. T311 is a binding site for FAD. R319 contacts glutathione. V342 contributes to the NADP(+) binding site. H439 provides a ligand contact to FAD. Catalysis depends on H439, which acts as the Proton acceptor.

The protein belongs to the class-I pyridine nucleotide-disulfide oxidoreductase family. In terms of assembly, homodimer. It depends on FAD as a cofactor.

The protein localises to the cytoplasm. The catalysed reaction is 2 glutathione + NADP(+) = glutathione disulfide + NADPH + H(+). Its function is as follows. Catalyzes the reduction of glutathione disulfide (GSSG) to reduced glutathione (GSH). Constitutes the major mechanism to maintain a high GSH:GSSG ratio in the cytosol. The protein is Glutathione reductase (gor) of Escherichia coli (strain K12).